A 720-amino-acid chain; its full sequence is Mitogen-activated protein kinase 6 (720 aa).

Residue methionine 1 forms a Peptide (Met-Gly) (interchain with G-Cter in ubiquitin) linkage. The Protein kinase domain occupies 20 to 316 (YMDLKPLGCG…AEEALSHPYM (297 aa)). ATP contacts are provided by residues 26-34 (LGCGGNGLV) and lysine 49. Aspartate 152 acts as the Proton acceptor in catalysis. At serine 189 the chain carries Phosphoserine; by PAK1, PAK2 and PAK3. The SEG motif signature appears at 189–191 (SEG). The FRIEDE motif motif lies at 332–337 (FHIEDE). Residues serine 386, serine 452, serine 554, and serine 556 each carry the phosphoserine modification. The tract at residues 638-657 (SEMLETEPVEEGKRGERGRE) is disordered. Over residues 647 to 657 (EEGKRGERGRE) the composition is skewed to basic and acidic residues. Residue serine 683 is modified to Phosphoserine. The span at 698–714 (PSAMKSSPQIPHKTYSN) shows a compositional bias: polar residues. The segment at 698 to 720 (PSAMKSSPQIPHKTYSNILKHLN) is disordered.

Belongs to the protein kinase superfamily. CMGC Ser/Thr protein kinase family. MAP kinase subfamily. Heterodimer with ERK4/MAPK4. Interacts with (via FRIEDE motif) MAPKAPK5. Interacts with UBE3A; this interaction may be indirect and mediated by HERC2, possibly via HERC2 interaction with NEURL4. Requires Mg(2+) as cofactor. Phosphorylated at Ser-189 by PAK1, PAK2 and PAK3 resulting in catalytic activation. Phosphorylated by MAPKAPK5 at other sites. In terms of processing, ubiquitination at Met-1 leads to degradation by the proteasome pathway. In terms of tissue distribution, highest levels within the nervous system, expressed in different tissues, mostly in skeletal muscle.

It is found in the cytoplasm. The protein resides in the nucleus. The enzyme catalyses L-seryl-[protein] + ATP = O-phospho-L-seryl-[protein] + ADP + H(+). The catalysed reaction is L-threonyl-[protein] + ATP = O-phospho-L-threonyl-[protein] + ADP + H(+). Its activity is regulated as follows. Activated by phosphorylation at Ser-189. Functionally, atypical MAPK protein. Phosphorylates microtubule-associated protein 2 (MAP2) and MAPKAPK5. The precise role of the complex formed with MAPKAPK5 is still unclear, but the complex follows a complex set of phosphorylation events: upon interaction with atypical MAPKAPK5, ERK3/MAPK6 is phosphorylated at Ser-189 and then mediates phosphorylation and activation of MAPKAPK5, which in turn phosphorylates ERK3/MAPK6. May promote entry in the cell cycle. The polypeptide is Mitogen-activated protein kinase 6 (Mapk6) (Rattus norvegicus (Rat)).